The chain runs to 41 residues: Large ribosomal subunit protein bL36 (41 aa).

This sequence belongs to the bacterial ribosomal protein bL36 family.

This is Large ribosomal subunit protein bL36 from Maricaulis maris (strain MCS10) (Caulobacter maris).